The primary structure comprises 709 residues: Ribosomal RNA large subunit methyltransferase K/L (709 aa).

In terms of domain architecture, THUMP spans 43–154 (LAYRITLWTR…NGVITIAMNF (112 aa)).

Belongs to the methyltransferase superfamily. RlmKL family.

It is found in the cytoplasm. The enzyme catalyses guanosine(2445) in 23S rRNA + S-adenosyl-L-methionine = N(2)-methylguanosine(2445) in 23S rRNA + S-adenosyl-L-homocysteine + H(+). The catalysed reaction is guanosine(2069) in 23S rRNA + S-adenosyl-L-methionine = N(2)-methylguanosine(2069) in 23S rRNA + S-adenosyl-L-homocysteine + H(+). In terms of biological role, specifically methylates the guanine in position 2445 (m2G2445) and the guanine in position 2069 (m7G2069) of 23S rRNA. In Shewanella sp. (strain W3-18-1), this protein is Ribosomal RNA large subunit methyltransferase K/L.